A 192-amino-acid chain; its full sequence is Ion-translocating oxidoreductase complex subunit A (192 aa).

6 helical membrane passes run 5 to 25 (LLLLISTVLVNNFVLVKFLGL), 39 to 59 (IGMSMATTFVLTLASILSYLV), 65 to 85 (LPFDLSYLRTMSFILVIAVVV), 102 to 122 (ALGIYLPLITTNCAVLGVALL), 134 to 154 (AIYGFGAAVGFSLVLILFSAM), and 171 to 191 (AIAMITAGLMSLAFMGFTGLV).

It belongs to the NqrDE/RnfAE family. As to quaternary structure, the complex is composed of six subunits: RnfA, RnfB, RnfC, RnfD, RnfE and RnfG.

The protein localises to the cell inner membrane. Part of a membrane-bound complex that couples electron transfer with translocation of ions across the membrane. The protein is Ion-translocating oxidoreductase complex subunit A of Shewanella sp. (strain ANA-3).